We begin with the raw amino-acid sequence, 264 residues long: Phosphate import ATP-binding protein PstB 1 (264 aa).

In terms of domain architecture, ABC transporter spans 20–259 (LETRDLNIFY…PKIKLTEDYI (240 aa)). 52–59 (GASGSGKS) serves as a coordination point for ATP.

This sequence belongs to the ABC transporter superfamily. Phosphate importer (TC 3.A.1.7) family. In terms of assembly, the complex is composed of two ATP-binding proteins (PstB), two transmembrane proteins (PstC and PstA) and a solute-binding protein (PstS).

The protein localises to the cell membrane. The enzyme catalyses phosphate(out) + ATP + H2O = ADP + 2 phosphate(in) + H(+). In terms of biological role, part of the ABC transporter complex PstSACB involved in phosphate import. Responsible for energy coupling to the transport system. The protein is Phosphate import ATP-binding protein PstB 1 of Ligilactobacillus salivarius (strain UCC118) (Lactobacillus salivarius).